We begin with the raw amino-acid sequence, 305 residues long: MSERKALLILHGKQALNEAVRAAVENKRKQGWKLAVRLTWEAGDAQRLVEEALAAGYRQIIAGGGDGTLRDIAEALAKQPGKASLVLLPLGTANDFSRAAAISLEPAEALELLEAPAHDIDLGEVGGQIFLNMATGGFGSQVTANTSEDLKKVLGGAAYLFTGLSRFSELHAAYGELQGPDFHWRGELLALGIGNGRQAGGGHVLCPEALVDDGLLDISILPAPQELVGTLKNLLSDGFGIDNMFVRARLPWVEIKVAEGLYINLDGEPLEGESLRFAARAGALRVHLPKDSPLLSATHRISHPD.

The DAGKc domain occupies 1 to 129; it reads MSERKALLIL…IDLGEVGGQI (129 aa). ATP is bound by residues T39, 65-71, and T92; that span reads GDGTLRD. 3 residues coordinate Mg(2+): L210, D213, and L215. The active-site Proton acceptor is E268.

The protein belongs to the diacylglycerol/lipid kinase family. YegS lipid kinase subfamily. Mg(2+) serves as cofactor. Ca(2+) is required as a cofactor.

It is found in the cytoplasm. Its function is as follows. Probably phosphorylates lipids; the in vivo substrate is unknown. This is Probable lipid kinase YegS-like from Pseudomonas fluorescens (strain Pf0-1).